The following is a 201-amino-acid chain: Phosphoprotein (201 aa).

Residues 1–70 (MATRPSSLVD…DQRTGREQLS (70 aa)) form a disordered region. 2 consecutive short sequence motifs (nuclear localization signal) follow at residues 29–36 (PRPRKIPR) and 181–193 (PPRI…SAPT).

Homomultimer; only active in its oligomeric state. Interacts with nucleoprotein/N. Interacts with matrix/M protein. Interacts with host TBK1. Interacts with polymerase L. Interacts with host HMGB1; this interaction is required to stabilize RNP on chromosomes. Post-translationally, phosphorylated by host PKC epsilon and casein kinase II.

It is found in the host nucleus. The protein localises to the host cytoplasm. Functionally, essential component of the RNA polymerase transcription and replication complex. Acts as a scaffold which brings L in close proximity to the N-RNA complex. Plays a role in the segregation of the viral genome in host daughter cells during mitosis by interacting with host HMGB1, a host chromatin-remodeling DNA architectural protein, thereby stabilizing RNP on chromosomes. Interacts with host TBK1 and thus interferes with activation of cellular antiviral state. Inhibits cellular histone acetyltransferase activities. The chain is Phosphoprotein (P/X) from Bos taurus (Bovine).